A 463-amino-acid chain; its full sequence is ATP synthase subunit beta (463 aa).

An ATP-binding site is contributed by 152-159 (GGAGVGKT).

This sequence belongs to the ATPase alpha/beta chains family. F-type ATPases have 2 components, CF(1) - the catalytic core - and CF(0) - the membrane proton channel. CF(1) has five subunits: alpha(3), beta(3), gamma(1), delta(1), epsilon(1). CF(0) has three main subunits: a(1), b(2) and c(9-12). The alpha and beta chains form an alternating ring which encloses part of the gamma chain. CF(1) is attached to CF(0) by a central stalk formed by the gamma and epsilon chains, while a peripheral stalk is formed by the delta and b chains.

The protein localises to the cell inner membrane. It carries out the reaction ATP + H2O + 4 H(+)(in) = ADP + phosphate + 5 H(+)(out). Functionally, produces ATP from ADP in the presence of a proton gradient across the membrane. The catalytic sites are hosted primarily by the beta subunits. This is ATP synthase subunit beta from Shewanella sp. (strain ANA-3).